The chain runs to 91 residues: DNA-directed RNA polymerase subunit omega (91 aa).

Belongs to the RNA polymerase subunit omega family. The RNAP catalytic core consists of 2 alpha, 1 beta, 1 beta' and 1 omega subunit. When a sigma factor is associated with the core the holoenzyme is formed, which can initiate transcription.

It catalyses the reaction RNA(n) + a ribonucleoside 5'-triphosphate = RNA(n+1) + diphosphate. Promotes RNA polymerase assembly. Latches the N- and C-terminal regions of the beta' subunit thereby facilitating its interaction with the beta and alpha subunits. In Edwardsiella ictaluri (strain 93-146), this protein is DNA-directed RNA polymerase subunit omega.